The chain runs to 198 residues: RNA-free ribonuclease P (198 aa).

This sequence belongs to the HARP family.

The catalysed reaction is Endonucleolytic cleavage of RNA, removing 5'-extranucleotides from tRNA precursor.. RNA-free RNase P that catalyzes the removal of the 5'-leader sequence from pre-tRNA to produce the mature 5'-terminus. This Nitrosococcus oceani (strain ATCC 19707 / BCRC 17464 / JCM 30415 / NCIMB 11848 / C-107) protein is RNA-free ribonuclease P.